We begin with the raw amino-acid sequence, 381 residues long: Flap endonuclease 1 (381 aa).

The tract at residues 1-105 is N-domain; that stretch reads MGIKGLNSII…HELDKRTSRR (105 aa). Aspartate 34 provides a ligand contact to Mg(2+). Residues arginine 47 and arginine 71 each contribute to the DNA site. The Mg(2+) site is built by aspartate 87, glutamate 156, glutamate 158, aspartate 177, and aspartate 179. The I-domain stretch occupies residues 120–251; the sequence is EKMKHERRLV…VTALKLMKEH (132 aa). Glutamate 156 serves as a coordination point for DNA. 2 residues coordinate DNA: glycine 229 and aspartate 231. Aspartate 231 lines the Mg(2+) pocket. Positions 338 to 346 are interaction with PCNA; it reads VQGRLDGFF.

It belongs to the XPG/RAD2 endonuclease family. FEN1 subfamily. In terms of assembly, interacts with PCNA. Three molecules of FEN1 bind to one PCNA trimer with each molecule binding to one PCNA monomer. PCNA stimulates the nuclease activity without altering cleavage specificity. It depends on Mg(2+) as a cofactor. Post-translationally, phosphorylated. Phosphorylation upon DNA damage induces relocalization to the nuclear plasma.

It localises to the nucleus. The protein localises to the nucleolus. The protein resides in the nucleoplasm. It is found in the mitochondrion. Functionally, structure-specific nuclease with 5'-flap endonuclease and 5'-3' exonuclease activities involved in DNA replication and repair. During DNA replication, cleaves the 5'-overhanging flap structure that is generated by displacement synthesis when DNA polymerase encounters the 5'-end of a downstream Okazaki fragment. It enters the flap from the 5'-end and then tracks to cleave the flap base, leaving a nick for ligation. Also involved in the long patch base excision repair (LP-BER) pathway, by cleaving within the apurinic/apyrimidinic (AP) site-terminated flap. Acts as a genome stabilization factor that prevents flaps from equilibrating into structures that lead to duplications and deletions. Also possesses 5'-3' exonuclease activity on nicked or gapped double-stranded DNA, and exhibits RNase H activity. Also involved in replication and repair of rDNA and in repairing mitochondrial DNA. The sequence is that of Flap endonuclease 1 from Candida glabrata (strain ATCC 2001 / BCRC 20586 / JCM 3761 / NBRC 0622 / NRRL Y-65 / CBS 138) (Yeast).